The primary structure comprises 816 residues: Protein kinase C-binding protein NELL2 (816 aa).

The signal sequence occupies residues 1–21 (MESRVLLRTFCLIFGLGAVWG). 4 N-linked (GlcNAc...) asparagine glycosylation sites follow: asparagine 53, asparagine 225, asparagine 293, and asparagine 298. Residues 64–228 (PRSVKASTAT…AQCPDLNRTC (165 aa)) form the Laminin G-like domain. Residues 272-331 (RTCTMKGTTYREFESWIDGCKNCTCLNGTIQCETLICPNPDCPLNSALAYVDGKCCKECK) enclose the VWFC 1 domain. An EGF-like 1 domain is found at 397 to 439 (GYDFCSERHNCMENSVCRNLNDRAVCSCRDGFRALREDNAYCE). Cystine bridges form between cysteine 401-cysteine 413, cysteine 407-cysteine 422, and cysteine 424-cysteine 438. The Ca(2+) site is built by aspartate 440, isoleucine 441, and glutamate 443. Positions 440 to 481 (DIDECAEGRHYCRENTMCVNTPGSFMCICKTGYIRIDDYSCT) constitute an EGF-like 2; calcium-binding domain. Cystine bridges form between cysteine 444–cysteine 457, cysteine 451–cysteine 466, cysteine 468–cysteine 480, cysteine 486–cysteine 499, cysteine 493–cysteine 508, cysteine 510–cysteine 521, cysteine 525–cysteine 535, cysteine 529–cysteine 541, and cysteine 543–cysteine 552. Asparagine 459, threonine 460, and serine 463 together coordinate Ca(2+). The 41-residue stretch at 482–522 (EHDECITNQHNCDENALCFNTVGGHNCVCKPGYTGNGTTCK) folds into the EGF-like 3; calcium-binding domain. N-linked (GlcNAc...) asparagine glycosylation is present at asparagine 517. In terms of domain architecture, EGF-like 4 spans 523–553 (AFCKDGCRNGGACIAANVCACPQGFTGPSCE). Threonine 548 is a glycosylation site (O-linked (GlcNAc...) threonine). Ca(2+) is bound by residues aspartate 555, isoleucine 556, and glutamate 558. Residues 555–601 (DIDECSDGFVQCDSRANCINLPGWYHCECRDGYHDNGMFSPSGESCE) enclose the EGF-like 5; calcium-binding domain. Intrachain disulfides connect cysteine 559/cysteine 572, cysteine 566/cysteine 581, and cysteine 583/cysteine 600. Ca(2+) is bound by residues asparagine 574, leucine 575, and tryptophan 578. Residues aspartate 602, isoleucine 603, and glutamate 605 each coordinate Ca(2+). In terms of domain architecture, EGF-like 6; calcium-binding spans 602 to 637 (DIDECGTGRHSCANDTICFNLDGGYDCRCPHGKNCT). Cystine bridges form between cysteine 606/cysteine 619, cysteine 613/cysteine 628, and cysteine 630/cysteine 636. The N-linked (GlcNAc...) asparagine glycan is linked to asparagine 615. Residues asparagine 621, leucine 622, and glycine 625 each contribute to the Ca(2+) site. A glycan (N-linked (GlcNAc...) asparagine) is linked at asparagine 635. VWFC domains are found at residues 638 to 693 (GDCI…PECD) and 698 to 756 (SQCL…PRCV).

Homotrimer. Binds to PRKCB. Interacts with NICOL1; this interaction triggers epididymal differentiation.

Its subcellular location is the secreted. In terms of biological role, plays multiple roles in neural tissues, regulates neuronal proliferation, survival, differentiation, polarization, as well as axon guidance and synaptic functions. Plays an important role in axon development during neuronal differentiation through the MAPK intracellular signaling pathway. Via binding to its receptor ROBO3, plays a role in axon guidance, functions as a repulsive guidance cue for commissural axons, helping to steer them across the spinal cord midline. Required for neuron survival through the modulation of MAPK signaling pathways too. Involved in the regulation of hypothalamic GNRH secretion and the control of puberty. Its function is as follows. Testicular luminal protein that signals through a ROS1-pathway to regulate the epididymal initial segment (IS) maturation, sperm maturation and male fertility. This is Protein kinase C-binding protein NELL2 (NELL2) from Pongo abelii (Sumatran orangutan).